The following is a 151-amino-acid chain: Ribonuclease H (151 aa).

Positions 2-143 (SSNVIEIYAD…ADALANKGVD (142 aa)) constitute an RNase H type-1 domain. Mg(2+) is bound by residues aspartate 11, glutamate 49, aspartate 71, and aspartate 135.

Belongs to the RNase H family. As to quaternary structure, monomer. Requires Mg(2+) as cofactor.

The protein localises to the cytoplasm. It carries out the reaction Endonucleolytic cleavage to 5'-phosphomonoester.. Its function is as follows. Endonuclease that specifically degrades the RNA of RNA-DNA hybrids. The polypeptide is Ribonuclease H (Methylobacillus flagellatus (strain ATCC 51484 / DSM 6875 / VKM B-1610 / KT)).